Reading from the N-terminus, the 156-residue chain is Small ribosomal subunit protein uS7 (156 aa).

This sequence belongs to the universal ribosomal protein uS7 family. As to quaternary structure, part of the 30S ribosomal subunit. Contacts proteins S9 and S11.

Its function is as follows. One of the primary rRNA binding proteins, it binds directly to 16S rRNA where it nucleates assembly of the head domain of the 30S subunit. Is located at the subunit interface close to the decoding center, probably blocks exit of the E-site tRNA. The polypeptide is Small ribosomal subunit protein uS7 (Mycoplasmopsis synoviae (strain 53) (Mycoplasma synoviae)).